Reading from the N-terminus, the 122-residue chain is Large ribosomal subunit protein uL14 (122 aa).

This sequence belongs to the universal ribosomal protein uL14 family. As to quaternary structure, part of the 50S ribosomal subunit. Forms a cluster with proteins L3 and L19. In the 70S ribosome, L14 and L19 interact and together make contacts with the 16S rRNA in bridges B5 and B8.

Binds to 23S rRNA. Forms part of two intersubunit bridges in the 70S ribosome. This is Large ribosomal subunit protein uL14 from Polynucleobacter asymbioticus (strain DSM 18221 / CIP 109841 / QLW-P1DMWA-1) (Polynucleobacter necessarius subsp. asymbioticus).